A 442-amino-acid chain; its full sequence is Coiled-coil domain-containing protein 112 (442 aa).

Coiled coils occupy residues 23–116 and 217–249; these read LEEL…RRIE and LEEKKKESIQNWKTKKQQKKEEILKLKEKVDTV. Disordered regions lie at residues 245–272, 289–312, and 392–442; these read KVDTVPLPSQSKAEDSPKQREEQRKKQK, KLASQLREEEEKERKQQRERQRQS, and EKVE…RQGI. 2 stretches are compositionally biased toward basic and acidic residues: residues 256–268 and 294–310; these read KAEDSPKQREEQR and LREEEEKERKQQRERQR. A coiled-coil region spans residues 281-400; it reads RKSLEMSAKL…KEKVENNVSR (120 aa).

The protein resides in the cytoplasm. It localises to the cytoskeleton. The protein localises to the microtubule organizing center. It is found in the centrosome. Its subcellular location is the centriolar satellite. The protein is Coiled-coil domain-containing protein 112 (Ccdc112) of Mus musculus (Mouse).